The primary structure comprises 603 residues: Elongation factor 4 (603 aa).

A tr-type G domain is found at serine 7–lysine 189. Residues aspartate 19 to threonine 24 and asparagine 136 to aspartate 139 contribute to the GTP site.

Belongs to the TRAFAC class translation factor GTPase superfamily. Classic translation factor GTPase family. LepA subfamily.

The protein localises to the cell inner membrane. It carries out the reaction GTP + H2O = GDP + phosphate + H(+). In terms of biological role, required for accurate and efficient protein synthesis under certain stress conditions. May act as a fidelity factor of the translation reaction, by catalyzing a one-codon backward translocation of tRNAs on improperly translocated ribosomes. Back-translocation proceeds from a post-translocation (POST) complex to a pre-translocation (PRE) complex, thus giving elongation factor G a second chance to translocate the tRNAs correctly. Binds to ribosomes in a GTP-dependent manner. The polypeptide is Elongation factor 4 (Prochlorococcus marinus (strain NATL1A)).